The chain runs to 950 residues: Inactive atromentin synthetase invA4 (950 aa).

Residues 37–460 (SRAVSQYPNH…SGRIKDTVVV (424 aa)) are adenylation (A) domain. Residues 592–670 (APSTETEKTL…TLAKYVDSLV (79 aa)) form the Carrier domain. The tract at residues 597 to 667 (TEKTLAGIYA…EIITLAKYVD (71 aa)) is thiolation and peptide carrier (T) domain. Ser629 carries the post-translational modification O-(pantetheine 4'-phosphoryl)serine. The tract at residues 693–797 (PIFMVHPGIG…GIIDMIPHHM (105 aa)) is thioesterase (TE) domain.

This sequence belongs to the ATP-dependent AMP-binding enzyme family.

Functionally, inactive atromentin synthetase homolog. Does not accept 4-hydroxyphenylpyruvate (4-HPP) as substrate. This chain is Inactive atromentin synthetase invA4 (invA4), found in Paxillus involutus (Naked brimcap).